We begin with the raw amino-acid sequence, 496 residues long: probable leucine aminopeptidase 2 (496 aa).

Residues 1–16 (MRSLLWASLLSGVLAG) form the signal peptide. The PA domain maps to 111 to 205 (PSVEVTADVA…SLEDGQKLIK (95 aa)). Asparagine 224 is a glycosylation site (N-linked (GlcNAc...) asparagine). 2 residues coordinate Zn(2+): histidine 248 and aspartate 260. Glutamate 292 functions as the Proton acceptor in the catalytic mechanism. Zn(2+) is bound at residue glutamate 293. A glycan (N-linked (GlcNAc...) asparagine) is linked at asparagine 307. Aspartate 321 serves as a coordination point for Zn(2+). N-linked (GlcNAc...) asparagine glycosylation is found at asparagine 341 and asparagine 402. Histidine 419 lines the Zn(2+) pocket. N-linked (GlcNAc...) asparagine glycosylation is found at asparagine 424 and asparagine 458. The segment at 475–496 (KRAPKTHAHVSGSGCWHSQVEA) is disordered.

The protein belongs to the peptidase M28 family. M28A subfamily. In terms of assembly, monomer. Zn(2+) serves as cofactor.

It is found in the secreted. In terms of biological role, extracellular aminopeptidase that releases a wide variety of amino acids from natural peptides. In Aspergillus oryzae (strain ATCC 42149 / RIB 40) (Yellow koji mold), this protein is probable leucine aminopeptidase 2 (lap2).